Reading from the N-terminus, the 310-residue chain is Lipoyl synthase (310 aa).

Cysteine 54, cysteine 59, cysteine 65, cysteine 80, cysteine 84, cysteine 87, and serine 295 together coordinate [4Fe-4S] cluster. The Radical SAM core domain maps to 66–284 (FASGTATFLI…LFGEDNLGFM (219 aa)).

It belongs to the radical SAM superfamily. Lipoyl synthase family. [4Fe-4S] cluster is required as a cofactor.

It is found in the cytoplasm. The enzyme catalyses [[Fe-S] cluster scaffold protein carrying a second [4Fe-4S](2+) cluster] + N(6)-octanoyl-L-lysyl-[protein] + 2 oxidized [2Fe-2S]-[ferredoxin] + 2 S-adenosyl-L-methionine + 4 H(+) = [[Fe-S] cluster scaffold protein] + N(6)-[(R)-dihydrolipoyl]-L-lysyl-[protein] + 4 Fe(3+) + 2 hydrogen sulfide + 2 5'-deoxyadenosine + 2 L-methionine + 2 reduced [2Fe-2S]-[ferredoxin]. The protein operates within protein modification; protein lipoylation via endogenous pathway; protein N(6)-(lipoyl)lysine from octanoyl-[acyl-carrier-protein]: step 2/2. Functionally, catalyzes the radical-mediated insertion of two sulfur atoms into the C-6 and C-8 positions of the octanoyl moiety bound to the lipoyl domains of lipoate-dependent enzymes, thereby converting the octanoylated domains into lipoylated derivatives. This chain is Lipoyl synthase, found in Prochlorococcus marinus (strain MIT 9215).